A 348-amino-acid chain; its full sequence is Rhodopsin (348 aa).

Residues 1–33 (TEGPFFYIPMVNTSGVVRSPYEYPQYYLVNPAA) lie on the Extracellular side of the membrane. N-linked (GlcNAc...) asparagine glycosylation occurs at Asn-12. The helical transmembrane segment at 34-58 (YAILGAYMFFLIIIGFPVNFMTLYV) threads the bilayer. At 59 to 70 (TLEHKKLRTPLN) the chain is on the cytoplasmic side. Residues 71–93 (YILLNLAVADLFMVIGGFTTTMY) form a helical membrane-spanning segment. The Extracellular segment spans residues 94-107 (SSMHGYFVLGRLGC). An intrachain disulfide couples Cys-107 to Cys-184. A helical transmembrane segment spans residues 108–130 (NMEGFSATLGGMISLWSLAVLAI). Positions 131–133 (ERW) match the 'Ionic lock' involved in activated form stabilization motif. Topologically, residues 131–149 (ERWVVVCKPISNFRFGENH) are cytoplasmic. A helical membrane pass occupies residues 150–170 (AIMGVSLTWFMALACTVPPLV). At 171–199 (GWSRYIPEGMQCSCGIDYYTRAEGFNNES) the chain is on the extracellular side. N-linked (GlcNAc...) asparagine glycosylation is present at Asn-197. Residues 200–221 (FVLYMFFCHFLVPLVIIFFCYG) form a helical membrane-spanning segment. Over 222-249 (RLLCAVKEAAAAQQESETTQRAEREVTR) the chain is Cytoplasmic. A helical membrane pass occupies residues 250 to 271 (MVIIMVIGFLVCWLPYASVAWF). Topologically, residues 272-283 (IFTHQGSEFGPL) are extracellular. A helical transmembrane segment spans residues 284–305 (FMTIPAFFAKSSSIYNPMIYIC). Lys-293 is modified (N6-(retinylidene)lysine). Residues 306–348 (MNKQFRNCMITTLFCGKNPFEGEEEGASSTKTEASSASSVSPA) lie on the Cytoplasmic side of the membrane. Residue Cys-320 is the site of S-palmitoyl cysteine attachment. The segment at 327–348 (GEEEGASSTKTEASSASSVSPA) is disordered. The segment covering 332–348 (ASSTKTEASSASSVSPA) has biased composition (low complexity).

The protein belongs to the G-protein coupled receptor 1 family. Opsin subfamily. Post-translationally, phosphorylated on some or all of the serine and threonine residues present in the C-terminal region. In terms of processing, contains one covalently linked retinal chromophore.

It is found in the membrane. It localises to the cell projection. The protein localises to the cilium. Its subcellular location is the photoreceptor outer segment. Photoreceptor required for image-forming vision at low light intensity. While most salt water fish species use retinal as chromophore, most freshwater fish use 3-dehydroretinal, or a mixture of retinal and 3-dehydroretinal. Light-induced isomerization of 11-cis to all-trans retinal triggers a conformational change that activates signaling via G-proteins. Subsequent receptor phosphorylation mediates displacement of the bound G-protein alpha subunit by arrestin and terminates signaling. The chain is Rhodopsin (rho) from Sargocentron punctatissimum (Speckled squirrelfish).